Here is a 129-residue protein sequence, read N- to C-terminus: Small ribosomal subunit protein uS11 (129 aa).

This sequence belongs to the universal ribosomal protein uS11 family. As to quaternary structure, part of the 30S ribosomal subunit. Interacts with proteins S7 and S18. Binds to IF-3.

Functionally, located on the platform of the 30S subunit, it bridges several disparate RNA helices of the 16S rRNA. Forms part of the Shine-Dalgarno cleft in the 70S ribosome. The protein is Small ribosomal subunit protein uS11 of Paracoccus denitrificans (strain Pd 1222).